We begin with the raw amino-acid sequence, 241 residues long: Uridylate kinase (241 aa).

An ATP-binding site is contributed by 15–18; sequence KLSG. The tract at residues 23 to 28 is involved in allosteric activation by GTP; that stretch reads GAEGFG. UMP is bound at residue G57. ATP contacts are provided by G58 and R62. Residues D77 and 138–145 each bind UMP; that span reads TGNPFFTT. ATP is bound by residues T165, F171, and D174.

The protein belongs to the UMP kinase family. Homohexamer.

Its subcellular location is the cytoplasm. The catalysed reaction is UMP + ATP = UDP + ADP. Its pathway is pyrimidine metabolism; CTP biosynthesis via de novo pathway; UDP from UMP (UMPK route): step 1/1. Allosterically activated by GTP. Inhibited by UTP. Catalyzes the reversible phosphorylation of UMP to UDP. This chain is Uridylate kinase, found in Sodalis glossinidius (strain morsitans).